The chain runs to 161 residues: Troponin C, slow skeletal and cardiac muscles (161 aa).

Met1 carries the post-translational modification N-acetylmethionine. 4 EF-hand domains span residues 16-51, 52-87, 92-127, and 128-161; these read QKNEFKAAFDIFVLGAEDGCISTKELGKVMRMLGQN, PTPEELQEMIDEVDEDGSGTVDFDEFLVMMVRCMKD, KSEEELSDLFRMFDKNADGYIDLDELKMMLQATGET, and ITEDDIEELMKDGDKNNDGRIDYDEFLEFMKGVE. The Ca(2+) site is built by Asp65, Asp67, Ser69, Thr71, and Glu76. Ser98 carries the phosphoserine modification. Asp105, Asn107, Asp109, Tyr111, Glu116, Asp141, Asn143, Asp145, Arg147, and Glu152 together coordinate Ca(2+).

This sequence belongs to the troponin C family.

In terms of biological role, troponin is the central regulatory protein of striated muscle contraction. Tn consists of three components: Tn-I which is the inhibitor of actomyosin ATPase, Tn-T which contains the binding site for tropomyosin and Tn-C. The binding of calcium to Tn-C abolishes the inhibitory action of Tn on actin filaments. The polypeptide is Troponin C, slow skeletal and cardiac muscles (Tnnc1) (Mus musculus (Mouse)).